We begin with the raw amino-acid sequence, 537 residues long: Carboxypeptidase Y homolog A (537 aa).

Residues 1–17 form the signal peptide; it reads MRLSTSALVLGAASSAV. A propeptide spanning residues 18–124 is cleaved from the precursor; that stretch reads AFDQKVLGDL…RLDNYNLRAK (107 aa). Intrachain disulfides connect cysteine 178-cysteine 418, cysteine 312-cysteine 326, cysteine 336-cysteine 359, cysteine 343-cysteine 352, and cysteine 381-cysteine 388. An N-linked (GlcNAc...) asparagine glycan is attached at asparagine 209. Serine 265 is an active-site residue. Residue aspartate 457 is part of the active site. An N-linked (GlcNAc...) asparagine glycan is attached at asparagine 503. Histidine 514 is an active-site residue.

This sequence belongs to the peptidase S10 family.

The protein resides in the vacuole. The enzyme catalyses Release of a C-terminal amino acid with broad specificity.. Its function is as follows. Vacuolar carboxypeptidase involved in degradation of small peptides. Digests preferentially peptides containing an aliphatic or hydrophobic residue in P1' position, as well as methionine, leucine or phenylalanine in P1 position of ester substrate. This is Carboxypeptidase Y homolog A (CPYA) from Fusarium vanettenii (strain ATCC MYA-4622 / CBS 123669 / FGSC 9596 / NRRL 45880 / 77-13-4) (Fusarium solani subsp. pisi).